We begin with the raw amino-acid sequence, 349 residues long: Arginine kinase (349 aa).

The 83-residue stretch at 3–85 folds into the Phosphagen kinase N-terminal domain; that stretch reads DLAELWEKVS…LGPVILDYHK (83 aa). Substrate is bound at residue 58–62; the sequence is GVGVY. Residues 113–349 enclose the Phosphagen kinase C-terminal domain; sequence WIVSTRVRVG…EEIIKLEKAA (237 aa). Residues 116 to 120 and H179 each bind ATP; that span reads STRVR. E219 is a substrate binding site. R223 lines the ATP pocket. Position 265 (C265) interacts with substrate. ATP-binding positions include 274-278 and 302-307; these read RASVH and RGIHGE. Substrate is bound at residue E307.

It belongs to the ATP:guanido phosphotransferase family.

The enzyme catalyses L-arginine + ATP = N(omega)-phospho-L-arginine + ADP + H(+). This is Arginine kinase from Liolophura japonica (Chiton).